The following is a 361-amino-acid chain: P2Y purinoceptor 4 (361 aa).

The Extracellular segment spans residues 1–30; that stretch reads MTSADSLLFTSLGPSPSSGDGDCKFNEEFK. Residues 31 to 58 traverse the membrane as a helical segment; that stretch reads FILLPLSYAVVFVLGLALNAPTLWLFLF. Over 59-68 the chain is Cytoplasmic; sequence RLRPWDATAT. The helical transmembrane segment at 69 to 91 threads the bilayer; sequence YMFHLALSDTLYVLSLPTLVYYY. At 92 to 108 the chain is on the extracellular side; that stretch reads AARNHWPFGTGFCKFVR. An intrachain disulfide couples Cys-104 to Cys-181. The helical transmembrane segment at 109 to 127 threads the bilayer; that stretch reads FLFYWNLYCSVLFLTCISV. The Cytoplasmic portion of the chain corresponds to 128–149; it reads HRYMGICHPLRAIRWGRPRFAG. Residues 150–170 form a helical membrane-spanning segment; it reads LLCLGVWLVVAGCLVPNLFFV. Topologically, residues 171–192 are extracellular; sequence TTNANGTTILCHDTTLPEEFDH. N-linked (GlcNAc...) asparagine glycosylation is present at Asn-175. A helical transmembrane segment spans residues 193–218; the sequence is YVYFSSTIMVLLFGFPFLITLVCYGL. The Cytoplasmic portion of the chain corresponds to 219–242; that stretch reads MARRLYRPLPGAGQSSSRLRSLRT. The helical transmembrane segment at 243-265 threads the bilayer; that stretch reads IAVVLTVFAVCFVPFHITRTIYY. Over 266-283 the chain is Extracellular; that stretch reads LARLLNAECRVLNIVNVV. A helical membrane pass occupies residues 284-305; sequence YKVTRPLASANSCLDPVLYLFT. The Cytoplasmic segment spans residues 306-361; the sequence is GDKYRNQLQQLCRGSTPKRRTTASSLALVTLHEESISRWADIHQDSIFPAYEGDRL.

The protein belongs to the G-protein coupled receptor 1 family. Post-translationally, phosphorylation of Ser-329 and Ser-330 is a key step in agonist-dependent desensitization and loss of surface P2RY4. This phosphorylation does not involve PKC, nor other calcium-activated kinases. Expressed in the liver, intestine, stomach, bladder and lung.

Its subcellular location is the cell membrane. Receptor for ATP and UTP coupled to G-proteins that activate a phosphatidylinositol-calcium second messenger system. This chain is P2Y purinoceptor 4 (P2ry4), found in Mus musculus (Mouse).